A 287-amino-acid chain; its full sequence is Inorganic pyrophosphatase (287 aa).

Arg79 is a binding site for diphosphate. Mg(2+)-binding residues include Asp116, Asp121, and Asp153.

This sequence belongs to the PPase family. Homodimer. The cofactor is Mg(2+).

The protein localises to the cytoplasm. It carries out the reaction diphosphate + H2O = 2 phosphate + H(+). The sequence is that of Inorganic pyrophosphatase (IPP1) from Kluyveromyces lactis (strain ATCC 8585 / CBS 2359 / DSM 70799 / NBRC 1267 / NRRL Y-1140 / WM37) (Yeast).